The chain runs to 462 residues: Glutamate--tRNA ligase 1 (462 aa).

Positions 8-18 (PSPTGYLHIGG) match the 'HIGH' region motif. The 'KMSKS' region motif lies at 236-240 (KLSKR). ATP is bound at residue K239.

Belongs to the class-I aminoacyl-tRNA synthetase family. Glutamate--tRNA ligase type 1 subfamily. Monomer.

Its subcellular location is the cytoplasm. It catalyses the reaction tRNA(Glu) + L-glutamate + ATP = L-glutamyl-tRNA(Glu) + AMP + diphosphate. In terms of biological role, catalyzes the attachment of glutamate to tRNA(Glu) in a two-step reaction: glutamate is first activated by ATP to form Glu-AMP and then transferred to the acceptor end of tRNA(Glu). The sequence is that of Glutamate--tRNA ligase 1 from Sulfurovum sp. (strain NBC37-1).